The following is a 620-amino-acid chain: Glutathione-regulated potassium-efflux system protein KefC (620 aa).

Over 1-3 (MDS) the chain is Periplasmic. Residues 4–24 (HTLIQALIYLGSAALIVPIAV) form a helical membrane-spanning segment. A topological domain (cytoplasmic) is located at residue R25. The chain crosses the membrane as a helical span at residues 26–46 (LGLGSVLGYLIAGCIIGPWGL). Residues 47 to 53 (RLVTDAE) lie on the Periplasmic side of the membrane. The chain crosses the membrane as a helical span at residues 54-74 (SILHFAEIGVVLMLFIIGLEL). Over 75 to 89 (DPQRLWKLRAAVFGG) the chain is Cytoplasmic. A helical membrane pass occupies residues 90–110 (GALQMVICGGLLGLFCMLLGL). Residues 111–113 (RWQ) lie on the Periplasmic side of the membrane. The chain crosses the membrane as a helical span at residues 114-134 (VAELIGMTLALSSTAIAMQAM). The Cytoplasmic portion of the chain corresponds to 135–148 (NERNLMVTQMGRSA). Residues 149-169 (FAVLLFQDIAAIPLVAMIPLL) form a helical membrane-spanning segment. The Periplasmic portion of the chain corresponds to 170–177 (AASSASTT). The chain crosses the membrane as a helical span at residues 178-198 (MGAFVLSALKVAGALALVVLL). Residues 199 to 213 (GRYVTRPALRFVARS) lie on the Cytoplasmic side of the membrane. Residues 214-233 (GLREVFSAVALFLVFGFGLL) traverse the membrane as a helical segment. Over 234–236 (LEE) the chain is Periplasmic. A helical transmembrane segment spans residues 237 to 254 (VGLSMAMGAFLAGVLLAS). The Cytoplasmic segment spans residues 255-269 (SEYRHALESDIEPFK). The chain crosses the membrane as a helical span at residues 270–290 (GLLLGLFFIGVGMSIDFGTLL). Residues 291 to 293 (ENP) lie on the Periplasmic side of the membrane. A helical transmembrane segment spans residues 294-314 (LRIVILLLGFLIIKIAMLWLI). Residues 315 to 326 (ARPLQVPNKQRR) lie on the Cytoplasmic side of the membrane. A helical membrane pass occupies residues 327 to 347 (WFAVLLGQGSEFAFVVFGAAQ). Residues 348 to 358 (MANVLEPEWAK) are Periplasmic-facing. A helical transmembrane segment spans residues 359 to 379 (SLTLAVALSMAATPILLVILN). Over 380–620 (RLEQSSTEEA…ADEPETKPSS (241 aa)) the chain is Cytoplasmic. An RCK N-terminal domain is found at 399–518 (QPRVIIAGFG…AGVEKPERET (120 aa)). Residues 597 to 620 (GWQGTEEGKHTGNMADEPETKPSS) are disordered.

This sequence belongs to the monovalent cation:proton antiporter 2 (CPA2) transporter (TC 2.A.37) family. KefC subfamily. Homodimer. Interacts with the regulatory subunit KefF.

It is found in the cell inner membrane. In terms of biological role, pore-forming subunit of a potassium efflux system that confers protection against electrophiles. Catalyzes K(+)/H(+) antiport. The polypeptide is Glutathione-regulated potassium-efflux system protein KefC (Escherichia coli O6:H1 (strain CFT073 / ATCC 700928 / UPEC)).